A 42-amino-acid polypeptide reads, in one-letter code: Bacteriocin bavaricin-MN (42 aa).

Cysteines 10 and 15 form a disulfide.

Belongs to the bacteriocin class IIA/YGNGV family.

Its subcellular location is the secreted. Has antimicrobial activity. The chain is Bacteriocin bavaricin-MN from Latilactobacillus sakei (Lactobacillus sakei).